The primary structure comprises 286 residues: 33 kDa chaperonin (286 aa).

2 cysteine pairs are disulfide-bonded: Cys-225-Cys-227 and Cys-258-Cys-261.

Belongs to the HSP33 family. Post-translationally, under oxidizing conditions two disulfide bonds are formed involving the reactive cysteines. Under reducing conditions zinc is bound to the reactive cysteines and the protein is inactive.

The protein localises to the cytoplasm. Functionally, redox regulated molecular chaperone. Protects both thermally unfolding and oxidatively damaged proteins from irreversible aggregation. Plays an important role in the bacterial defense system toward oxidative stress. This Shewanella frigidimarina (strain NCIMB 400) protein is 33 kDa chaperonin.